The chain runs to 197 residues: Nucleoid occlusion factor SlmA (197 aa).

Residues 7–67 form the HTH tetR-type domain; sequence INRREHILQC…GLIDFIEESL (61 aa). Residues 30–49 constitute a DNA-binding region (H-T-H motif); it reads TTAKLAAEVGVSEAALYRHF.

This sequence belongs to the nucleoid occlusion factor SlmA family. In terms of assembly, homodimer. Interacts with FtsZ.

Its subcellular location is the cytoplasm. It is found in the nucleoid. Its function is as follows. Required for nucleoid occlusion (NO) phenomenon, which prevents Z-ring formation and cell division over the nucleoid. Acts as a DNA-associated cell division inhibitor that binds simultaneously chromosomal DNA and FtsZ, and disrupts the assembly of FtsZ polymers. SlmA-DNA-binding sequences (SBS) are dispersed on non-Ter regions of the chromosome, preventing FtsZ polymerization at these regions. In Shewanella sediminis (strain HAW-EB3), this protein is Nucleoid occlusion factor SlmA.